Consider the following 265-residue polypeptide: Hydroxyethylthiazole kinase (265 aa).

Methionine 50 serves as a coordination point for substrate. Residues arginine 125 and threonine 171 each contribute to the ATP site. Glycine 198 is a substrate binding site.

This sequence belongs to the Thz kinase family. Mg(2+) is required as a cofactor.

The catalysed reaction is 5-(2-hydroxyethyl)-4-methylthiazole + ATP = 4-methyl-5-(2-phosphooxyethyl)-thiazole + ADP + H(+). The protein operates within cofactor biosynthesis; thiamine diphosphate biosynthesis; 4-methyl-5-(2-phosphoethyl)-thiazole from 5-(2-hydroxyethyl)-4-methylthiazole: step 1/1. Catalyzes the phosphorylation of the hydroxyl group of 4-methyl-5-beta-hydroxyethylthiazole (THZ). The protein is Hydroxyethylthiazole kinase of Cronobacter sakazakii (strain ATCC BAA-894) (Enterobacter sakazakii).